The sequence spans 840 residues: Microcephalin (840 aa).

Residues 1–93 (MAAHILKDVV…AHIDESLFPA (93 aa)) enclose the BRCT 1 domain. The interval 184-206 (KEKRENLSPSSSQMIQQSHDNPS) is disordered. Over residues 190–206 (LSPSSSQMIQQSHDNPS) the composition is skewed to polar residues. Ser-279, Ser-287, Ser-296, and Ser-333 each carry phosphoserine. Disordered stretches follow at residues 313–379 (PDQK…SIRR) and 418–437 (PDNL…QLPS). At Thr-335 the chain carries Phosphothreonine. Residues 355–378 (KRQRVSHGSHSPSKGKSKRKRSIR) are compositionally biased toward basic residues. Positions 427–437 (ENLPPTSQLPS) are enriched in polar residues. Ser-552 carries the phosphoserine modification. A disordered region spans residues 562–586 (LKSTQNKGTTSKISNSSEGEAQSEH). Residues 563-581 (KSTQNKGTTSKISNSSEGE) are compositionally biased toward polar residues. BRCT domains lie at 644–734 (SGRG…PFEL) and 755–837 (YRGT…NYLL).

As to quaternary structure, interacts with CDC27 and maybe other components of the APC/C complex. Interacts with histone variant H2AX under DNA damage conditions.

It localises to the cytoplasm. The protein localises to the cytoskeleton. Its subcellular location is the microtubule organizing center. The protein resides in the centrosome. Functionally, implicated in chromosome condensation and DNA damage induced cellular responses. May play a role in neurogenesis and regulation of the size of the cerebral cortex. The sequence is that of Microcephalin from Hylobates lar (Lar gibbon).